A 182-amino-acid polypeptide reads, in one-letter code: Molybdopterin synthase catalytic subunit (182 aa).

Residues 119 to 120 (HR), Lys135, and 142 to 144 (KRE) each bind substrate. Positions 152–182 (VWRANRDGAPGQRIDTAEPAVGAGSGGEIDD) are disordered.

This sequence belongs to the MoaE family. MOCS2B subfamily. As to quaternary structure, heterotetramer; composed of 2 small (MOCS2A) and 2 large (MOCS2B) subunits.

It localises to the cytoplasm. It catalyses the reaction 2 [molybdopterin-synthase sulfur-carrier protein]-C-terminal-Gly-aminoethanethioate + cyclic pyranopterin phosphate + H2O = molybdopterin + 2 [molybdopterin-synthase sulfur-carrier protein]-C-terminal Gly-Gly + 2 H(+). The protein operates within cofactor biosynthesis; molybdopterin biosynthesis. Functionally, catalytic subunit of the molybdopterin synthase complex, a complex that catalyzes the conversion of precursor Z into molybdopterin. Acts by mediating the incorporation of 2 sulfur atoms from thiocarboxylated MOCS2A into precursor Z to generate a dithiolene group. This is Molybdopterin synthase catalytic subunit from Pyricularia oryzae (strain 70-15 / ATCC MYA-4617 / FGSC 8958) (Rice blast fungus).